Here is a 254-residue protein sequence, read N- to C-terminus: Nickel import ATP-binding protein NikD (254 aa).

One can recognise an ABC transporter domain in the interval 2–241; sequence PQQIELRNIT…PKHTVTRSLV (240 aa). 36–43 lines the ATP pocket; it reads GGSGSGKS.

The protein belongs to the ABC transporter superfamily. Nickel importer (TC 3.A.1.5.3) family. As to quaternary structure, the complex is composed of two ATP-binding proteins (NikD and NikE), two transmembrane proteins (NikB and NikC) and a solute-binding protein (NikA).

It localises to the cell inner membrane. It catalyses the reaction Ni(2+)(out) + ATP + H2O = Ni(2+)(in) + ADP + phosphate + H(+). In terms of biological role, part of the ABC transporter complex NikABCDE involved in nickel import. Responsible for energy coupling to the transport system. This chain is Nickel import ATP-binding protein NikD, found in Shigella flexneri.